The sequence spans 44 residues: Protein PsbN (44 aa).

A helical membrane pass occupies residues 7–29; the sequence is FFTTFLGCLLLSITGYSIYVGFG.

Belongs to the PsbN family.

The protein resides in the plastid. It localises to the chloroplast thylakoid membrane. Functionally, may play a role in photosystem I and II biogenesis. This chain is Protein PsbN, found in Pleurastrum terricola (Filamentous green alga).